The chain runs to 265 residues: Indole-3-glycerol phosphate synthase (265 aa).

Belongs to the TrpC family.

It carries out the reaction 1-(2-carboxyphenylamino)-1-deoxy-D-ribulose 5-phosphate + H(+) = (1S,2R)-1-C-(indol-3-yl)glycerol 3-phosphate + CO2 + H2O. It participates in amino-acid biosynthesis; L-tryptophan biosynthesis; L-tryptophan from chorismate: step 4/5. This Xanthomonas oryzae pv. oryzae (strain MAFF 311018) protein is Indole-3-glycerol phosphate synthase.